The sequence spans 250 residues: Probable transcriptional regulatory protein ckrop_1032 (250 aa).

A disordered region spans residues 1–22 (MSGHSKWATTKHKKAANDAKRG).

Belongs to the TACO1 family.

It localises to the cytoplasm. The chain is Probable transcriptional regulatory protein ckrop_1032 from Corynebacterium kroppenstedtii (strain DSM 44385 / JCM 11950 / CIP 105744 / CCUG 35717).